A 290-amino-acid chain; its full sequence is 4-hydroxy-tetrahydrodipicolinate synthase (290 aa).

T48 is a binding site for pyruvate. Y137 functions as the Proton donor/acceptor in the catalytic mechanism. The Schiff-base intermediate with substrate role is filled by K165. A pyruvate-binding site is contributed by I206.

The protein belongs to the DapA family. Homotetramer; dimer of dimers.

The protein resides in the cytoplasm. It carries out the reaction L-aspartate 4-semialdehyde + pyruvate = (2S,4S)-4-hydroxy-2,3,4,5-tetrahydrodipicolinate + H2O + H(+). The protein operates within amino-acid biosynthesis; L-lysine biosynthesis via DAP pathway; (S)-tetrahydrodipicolinate from L-aspartate: step 3/4. Catalyzes the condensation of (S)-aspartate-beta-semialdehyde [(S)-ASA] and pyruvate to 4-hydroxy-tetrahydrodipicolinate (HTPA). This is 4-hydroxy-tetrahydrodipicolinate synthase from Enterococcus faecalis (strain ATCC 700802 / V583).